We begin with the raw amino-acid sequence, 268 residues long: MHRIDETFRRLRAQSRKALIPFITAGDPSLEAAVPVMHALVRAGADVIELGVPFSDPMADGPVIQHSSERALQRGVGLAYVLQTVDVFRQSDAVTPVVLMGYLNPLEIYGIARFTQHAVACGVDGVLLVDLPPEEADEIRPIFSAAGLALIVLASPTTSASRLARLSGVAQGYLYYVSFSGVTGADRLDAQSAGDRLRGLRAQTQVPVVVGFGIRDAASAAVMAVDADGVVVGSALVTALSDAPDVDTACRRADAFLAPLRQALDAVK.

Residues E49 and D60 each act as proton acceptor in the active site.

Belongs to the TrpA family. Tetramer of two alpha and two beta chains.

It catalyses the reaction (1S,2R)-1-C-(indol-3-yl)glycerol 3-phosphate + L-serine = D-glyceraldehyde 3-phosphate + L-tryptophan + H2O. It participates in amino-acid biosynthesis; L-tryptophan biosynthesis; L-tryptophan from chorismate: step 5/5. The alpha subunit is responsible for the aldol cleavage of indoleglycerol phosphate to indole and glyceraldehyde 3-phosphate. This is Tryptophan synthase alpha chain from Xylella fastidiosa (strain 9a5c).